Consider the following 344-residue polypeptide: L-rhamnose-proton symporter (344 aa).

10 helical membrane passes run 5 to 25 (ILLG…FYAP), 38 to 58 (WAIA…YWLL), 72 to 92 (ILLP…GYGL), 101 to 121 (MGIG…TPII), 137 to 157 (TLIG…AGLL), 175 to 195 (LALA…MSAA), 214 to 234 (LPSY…FCII), 259 to 279 (ILFS…YAWG), 289 to 309 (FMSW…VGLL), and 323 to 343 (VLCI…LGMA).

This sequence belongs to the L-rhamnose transporter (TC 2.A.7.6) family.

It is found in the cell inner membrane. It carries out the reaction L-rhamnopyranose(in) + H(+)(in) = L-rhamnopyranose(out) + H(+)(out). Uptake of L-rhamnose across the cytoplasmic membrane with the concomitant transport of protons into the cell (symport system). In Mannheimia succiniciproducens (strain KCTC 0769BP / MBEL55E), this protein is L-rhamnose-proton symporter.